The primary structure comprises 268 residues: GTP cyclohydrolase FolE2 (268 aa).

The protein belongs to the GTP cyclohydrolase IV family.

The catalysed reaction is GTP + H2O = 7,8-dihydroneopterin 3'-triphosphate + formate + H(+). Its pathway is cofactor biosynthesis; 7,8-dihydroneopterin triphosphate biosynthesis; 7,8-dihydroneopterin triphosphate from GTP: step 1/1. Functionally, converts GTP to 7,8-dihydroneopterin triphosphate. This is GTP cyclohydrolase FolE2 from Paraburkholderia phymatum (strain DSM 17167 / CIP 108236 / LMG 21445 / STM815) (Burkholderia phymatum).